The sequence spans 133 residues: Small ribosomal subunit protein uS11 (133 aa).

It belongs to the universal ribosomal protein uS11 family. As to quaternary structure, part of the 30S ribosomal subunit. Interacts with proteins S7 and S18. Binds to IF-3.

Its function is as follows. Located on the platform of the 30S subunit, it bridges several disparate RNA helices of the 16S rRNA. Forms part of the Shine-Dalgarno cleft in the 70S ribosome. The protein is Small ribosomal subunit protein uS11 of Ralstonia nicotianae (strain ATCC BAA-1114 / GMI1000) (Ralstonia solanacearum).